A 483-amino-acid chain; its full sequence is Aspartyl/glutamyl-tRNA(Asn/Gln) amidotransferase subunit B (483 aa).

The protein belongs to the GatB/GatE family. GatB subfamily. Heterotrimer of A, B and C subunits.

The catalysed reaction is L-glutamyl-tRNA(Gln) + L-glutamine + ATP + H2O = L-glutaminyl-tRNA(Gln) + L-glutamate + ADP + phosphate + H(+). It catalyses the reaction L-aspartyl-tRNA(Asn) + L-glutamine + ATP + H2O = L-asparaginyl-tRNA(Asn) + L-glutamate + ADP + phosphate + 2 H(+). Allows the formation of correctly charged Asn-tRNA(Asn) or Gln-tRNA(Gln) through the transamidation of misacylated Asp-tRNA(Asn) or Glu-tRNA(Gln) in organisms which lack either or both of asparaginyl-tRNA or glutaminyl-tRNA synthetases. The reaction takes place in the presence of glutamine and ATP through an activated phospho-Asp-tRNA(Asn) or phospho-Glu-tRNA(Gln). This is Aspartyl/glutamyl-tRNA(Asn/Gln) amidotransferase subunit B from Rickettsia conorii (strain ATCC VR-613 / Malish 7).